Consider the following 324-residue polypeptide: Acetyl-coenzyme A carboxylase carboxyl transferase subunit alpha (324 aa).

Positions 44 to 298 constitute a CoA carboxyltransferase C-terminal domain; sequence RFQNQLVKLQ…KKELTEQLDS (255 aa).

The protein belongs to the AccA family. Acetyl-CoA carboxylase is a heterohexamer composed of biotin carboxyl carrier protein (accB), biotin carboxylase (accC) and two subunits each of ACCase subunit alpha (accA) and ACCase subunit beta (accD).

It is found in the plastid. Its subcellular location is the chloroplast. The catalysed reaction is N(6)-carboxybiotinyl-L-lysyl-[protein] + acetyl-CoA = N(6)-biotinyl-L-lysyl-[protein] + malonyl-CoA. Its pathway is lipid metabolism; malonyl-CoA biosynthesis; malonyl-CoA from acetyl-CoA: step 1/1. Component of the acetyl coenzyme A carboxylase (ACC) complex. First, biotin carboxylase catalyzes the carboxylation of biotin on its carrier protein (BCCP) and then the CO(2) group is transferred by the carboxyltransferase to acetyl-CoA to form malonyl-CoA. In Pyropia yezoensis (Susabi-nori), this protein is Acetyl-coenzyme A carboxylase carboxyl transferase subunit alpha.